The primary structure comprises 332 residues: Tetraacyldisaccharide 4'-kinase (332 aa).

Position 60–67 (60–67) interacts with ATP; the sequence is TVGGTGKT.

It belongs to the LpxK family.

It carries out the reaction a lipid A disaccharide + ATP = a lipid IVA + ADP + H(+). It participates in glycolipid biosynthesis; lipid IV(A) biosynthesis; lipid IV(A) from (3R)-3-hydroxytetradecanoyl-[acyl-carrier-protein] and UDP-N-acetyl-alpha-D-glucosamine: step 6/6. Transfers the gamma-phosphate of ATP to the 4'-position of a tetraacyldisaccharide 1-phosphate intermediate (termed DS-1-P) to form tetraacyldisaccharide 1,4'-bis-phosphate (lipid IVA). This chain is Tetraacyldisaccharide 4'-kinase, found in Pseudomonas paraeruginosa (strain DSM 24068 / PA7) (Pseudomonas aeruginosa (strain PA7)).